The primary structure comprises 446 residues: 3-phosphoshikimate 1-carboxyvinyltransferase (446 aa).

The segment at 1 to 20 (MSTWPAPSTATPVHATVTVP) is disordered. Residues Lys23, Ser24, and Arg28 each contribute to the 3-phosphoshikimate site. Lys23 serves as a coordination point for phosphoenolpyruvate. Phosphoenolpyruvate contacts are provided by Gly100 and Arg128. 3-phosphoshikimate contacts are provided by Ser171, Ser172, Gln173, Ser200, Glu315, and His344. Gln173 serves as a coordination point for phosphoenolpyruvate. Glu315 (proton acceptor) is an active-site residue. 3 residues coordinate phosphoenolpyruvate: Arg348, Arg389, and Lys414.

Belongs to the EPSP synthase family. In terms of assembly, monomer.

It is found in the cytoplasm. It catalyses the reaction 3-phosphoshikimate + phosphoenolpyruvate = 5-O-(1-carboxyvinyl)-3-phosphoshikimate + phosphate. Its pathway is metabolic intermediate biosynthesis; chorismate biosynthesis; chorismate from D-erythrose 4-phosphate and phosphoenolpyruvate: step 6/7. Functionally, catalyzes the transfer of the enolpyruvyl moiety of phosphoenolpyruvate (PEP) to the 5-hydroxyl of shikimate-3-phosphate (S3P) to produce enolpyruvyl shikimate-3-phosphate and inorganic phosphate. This is 3-phosphoshikimate 1-carboxyvinyltransferase from Mycolicibacterium vanbaalenii (strain DSM 7251 / JCM 13017 / BCRC 16820 / KCTC 9966 / NRRL B-24157 / PYR-1) (Mycobacterium vanbaalenii).